The chain runs to 846 residues: Arsenate respiratory reductase molybdopterin-containing subunit ArrA (846 aa).

Positions 1–29 form a signal peptide, tat-type signal; that stretch reads MRIKRREFLKASAAVGAVAVASPTLNAFA. The 4Fe-4S Mo/W bis-MGD-type domain maps to 43-99; the sequence is GKWIPSTCQGCTTWCPVEFLFRMAVRSKYAATQLSKANNGYCCVRGHLMLQQLYDPD. [4Fe-4S] cluster contacts are provided by Cys50, Cys53, Cys57, and Cys85. Arg155 provides a ligand contact to arsenite. Tyr156 is a binding site for arsenate. Residue His179 participates in arsenite binding. Residue Ser180 coordinates arsenate. Residue Cys183 participates in Mo-bis(molybdopterin guanine dinucleotide) binding. Residue Lys188 participates in arsenate binding. An arsenite-binding site is contributed by Tyr200.

It belongs to the prokaryotic molybdopterin-containing oxidoreductase family. Heterodimer composed of one large subunit (ArrA) and one small subunit (ArrB). Requires [4Fe-4S] cluster as cofactor. The cofactor is Mo-bis(molybdopterin guanine dinucleotide). In terms of processing, predicted to be exported by the Tat system. The position of the signal peptide cleavage has been experimentally proven.

The protein localises to the periplasm. The enzyme catalyses arsenite + A + H2O = arsenate + AH2 + H(+). Functionally, component of the arsenate respiratory reductase (Arr) complex, which catalyzes the reduction of arsenate (As(V)) to arsenite (As(III)). Can use acetate as the electron donor. ArrA is the arsenate-binding subunit. The chain is Arsenate respiratory reductase molybdopterin-containing subunit ArrA from Chrysiogenes arsenatis.